The primary structure comprises 367 residues: Germination protease (367 aa).

A propeptide spanning residues 1-15 is cleaved from the precursor; the sequence is MKEPLDLSKYSVRTD.

The protein belongs to the peptidase A25 family. In terms of assembly, homotetramer. Post-translationally, autoproteolytically processed. The inactive tetrameric zymogen termed p46 autoprocesses to a smaller form termed p41, which is active only during spore germination.

The enzyme catalyses Endopeptidase action with P4 Glu or Asp, P1 preferably Glu &gt; Asp, P1' hydrophobic and P2' Ala.. Its function is as follows. Initiates the rapid degradation of small, acid-soluble proteins during spore germination. The sequence is that of Germination protease from Bacillus cereus (strain AH187).